The chain runs to 202 residues: NADH-quinone oxidoreductase subunit B 2 (202 aa).

[4Fe-4S] cluster is bound by residues C38, C39, C104, and C133.

It belongs to the complex I 20 kDa subunit family. NDH-1 is composed of 14 different subunits. Subunits NuoB, C, D, E, F, and G constitute the peripheral sector of the complex. [4Fe-4S] cluster serves as cofactor.

It localises to the cell inner membrane. It carries out the reaction a quinone + NADH + 5 H(+)(in) = a quinol + NAD(+) + 4 H(+)(out). NDH-1 shuttles electrons from NADH, via FMN and iron-sulfur (Fe-S) centers, to quinones in the respiratory chain. The immediate electron acceptor for the enzyme in this species is believed to be ubiquinone. Couples the redox reaction to proton translocation (for every two electrons transferred, four hydrogen ions are translocated across the cytoplasmic membrane), and thus conserves the redox energy in a proton gradient. This chain is NADH-quinone oxidoreductase subunit B 2, found in Koribacter versatilis (strain Ellin345).